Reading from the N-terminus, the 485-residue chain is Caspid protein (485 aa).

2 N-linked (GlcNAc...) asparagine; by host glycosylation sites follow: asparagine 5 and asparagine 178. A particle formation region spans residues 236–262 (IALTLFNLADTLLGGLPTELISSAGGQ). Asparagine 430 carries an N-linked (GlcNAc...) asparagine; by host glycan. Residues 453–478 (TTSLGAGPVSISAVAVLAPHSALALL) are oligomerization.

Belongs to the hepevirus capsid protein family. As to quaternary structure, self-assembles to form the capsid. The capsid is dominated by dimers that define the 30 morphological units. Interacts with phosphorylated protein ORF3. Interacts with host TMEM134. Interacts with host ASGR1 and ASGR2; these interactions facilitate infection of host hepatocytes. Not N-glycosylated.

It is found in the virion. It localises to the host cytoplasm. The protein resides in the host endoplasmic reticulum. The protein localises to the host Golgi apparatus. Its subcellular location is the host cell surface. It is found in the host nucleus. Forms an icosahedral capsid with a T=1 symmetry and a 34 nm diameter. The capsid is composed of 60 copies linked to each other. Binds to the 5' end of the genomic RNA to mediate genome encapsidation. Binds to heparin surface proteoglycans (HSPGs) to mediate viral entry. Additionally, the interactions with host ASGR1 and ASGR2 facilitate viral infection of hepatocytes. Inhibits IFN production by blocking host TBK1-induced IRF3 phosphorylation. The nuclear form probably modulates host gene expression. The polypeptide is Caspid protein (Hepatitis E virus (isolate Rhesus/HT-4) (HEV)).